Reading from the N-terminus, the 756-residue chain is Catalase-peroxidase (756 aa).

The segment at residues 91 to 244 is a cross-link (tryptophyl-tyrosyl-methioninium (Trp-Tyr) (with M-270)); it reads WHSAGTYRTG…LAAVQMGLIY (154 aa). The active-site Proton acceptor is the H92. The segment at 198–230 is disordered; sequence AQKKMQQPGDGTLVAEPENHANEESRTASGERN. The segment covering 214-223 has biased composition (basic and acidic residues); the sequence is PENHANEESR. The segment at residues 244-270 is a cross-link (tryptophyl-tyrosyl-methioninium (Tyr-Met) (with W-91)); that stretch reads YVNPEGPEGVPDPVASARDIRETFGRM. H285 contacts heme b. The disordered stretch occupies residues 371-390; sequence KNGAGAGKIPDAHDPSKRHA.

This sequence belongs to the peroxidase family. Peroxidase/catalase subfamily. In terms of assembly, homodimer or homotetramer. It depends on heme b as a cofactor. Post-translationally, formation of the three residue Trp-Tyr-Met cross-link is important for the catalase, but not the peroxidase activity of the enzyme.

It catalyses the reaction H2O2 + AH2 = A + 2 H2O. The catalysed reaction is 2 H2O2 = O2 + 2 H2O. Its function is as follows. Bifunctional enzyme with both catalase and broad-spectrum peroxidase activity. The sequence is that of Catalase-peroxidase from Pseudomonas syringae pv. tomato (strain ATCC BAA-871 / DC3000).